Consider the following 84-residue polypeptide: Small ribosomal subunit protein bS16 (84 aa).

Belongs to the bacterial ribosomal protein bS16 family.

In Delftia acidovorans (strain DSM 14801 / SPH-1), this protein is Small ribosomal subunit protein bS16.